Here is a 463-residue protein sequence, read N- to C-terminus: MEKPSREAFEGNNKLLIGIVLSVITFWLFAQSLVNVVLILEDSFNTDIGTVNIAVSITALFSGMFVVGVGGLADKYGRIKLTNIGIILNILGSLLIIISNIPLLLIIGRLIQGLSAACIMPATLSIIKSYYIGKDRQRALSYWSIGSWGGSGVCSFFGGAVATLLGWRWIFILSIIISLIALFLIKGTPETKSKSISLNKFDIKGLVLLVIMLLSLNILITKGSELGVTSLLFITLLAIAIGSFSLFIVLEKRATNPLIDFKLFKNKAYTGATASNFLLNGVAGTLIVANTFVQRGLGYSLLQAGSLSITYLVMVLIMIRVGEKLLQTLGCKKPMLIGTGVLIVGECLISLTFLPEILYVICCIIGYLFFGLGLGIYATPSTDTAIANAPLEKVGVAAGIYKMASALGGAFGVALSGAVYAIVSNMTNIYTGAMIALWLNAGMAILSFVIILLLVPKQNDTQL.

14 helical membrane passes run I19–I39, I53–A73, I86–I106, I107–I127, Y142–A162, L165–I185, F201–T221, S230–L250, T273–V293, Y299–I319, P334–L354, I357–Y377, M403–V423, and I435–V455.

This sequence belongs to the major facilitator superfamily. TCR/Tet family.

The protein resides in the cell membrane. In terms of biological role, multidrug efflux pump that acts independently of NorA and is one of the factors that confers resistance against diverse quinolones and chemical compounds. This Staphylococcus aureus (strain bovine RF122 / ET3-1) protein is Quinolone resistance protein NorB (norB).